A 303-amino-acid polypeptide reads, in one-letter code: Cytochrome c oxidase subunit 2 (303 aa).

Residues Met-1 to Ala-25 form the signal peptide. Helical transmembrane passes span Phe-60 to Val-80 and Trp-104 to Phe-124. Cu cation contacts are provided by His-217, Cys-252, Cys-256, and His-260.

It belongs to the cytochrome c oxidase subunit 2 family. It depends on Cu cation as a cofactor.

It is found in the cell membrane. The catalysed reaction is 4 Fe(II)-[cytochrome c] + O2 + 8 H(+)(in) = 4 Fe(III)-[cytochrome c] + 2 H2O + 4 H(+)(out). Subunits I and II form the functional core of the enzyme complex. Electrons originating in cytochrome c are transferred via heme a and Cu(A) to the binuclear center formed by heme a3 and Cu(B). The chain is Cytochrome c oxidase subunit 2 (ctaC) from Cereibacter sphaeroides (Rhodobacter sphaeroides).